Reading from the N-terminus, the 259-residue chain is MATIKEIKEFLVTVKELESPIFLELEKDNRSGVQKEISKRKRAIQAELDENLRLESMLSYEKELYKQGLTLIAGIDEVGRGPLAGPVVAAAVILSKNCKIKGLNDSKKIPKKKHLEIFQAVQDQALSIGIGIIDNQVIDQVNIYEATKLAMQEAISQLSPQPEHLLIDAMKLDLPISQTSIIKGDANSLSIAAASIVAKVTRDELLKEYDQQFPGYDFATNAGYGTAKHLEGLTKLGVTPIHRTSFEPVKSLVLGKKES.

The region spanning 70–258 (TLIAGIDEVG…VKSLVLGKKE (189 aa)) is the RNase H type-2 domain. The a divalent metal cation site is built by Asp-76, Glu-77, and Asp-168.

It belongs to the RNase HII family. Mn(2+) serves as cofactor. Requires Mg(2+) as cofactor.

The protein resides in the cytoplasm. The enzyme catalyses Endonucleolytic cleavage to 5'-phosphomonoester.. Endonuclease that specifically degrades the RNA of RNA-DNA hybrids. This chain is Ribonuclease HII, found in Streptococcus pneumoniae serotype 4 (strain ATCC BAA-334 / TIGR4).